We begin with the raw amino-acid sequence, 91 residues long: Small ribosomal subunit protein uS19 (91 aa).

It belongs to the universal ribosomal protein uS19 family.

Functionally, protein S19 forms a complex with S13 that binds strongly to the 16S ribosomal RNA. The polypeptide is Small ribosomal subunit protein uS19 (Hahella chejuensis (strain KCTC 2396)).